A 126-amino-acid polypeptide reads, in one-letter code: C-type natriuretic peptide (126 aa).

The signal sequence occupies residues 1-23 (MHLSQLIACALLLALLSLRPSEA). The disordered stretch occupies residues 19–71 (RPSEAKPGTPPKVPRTPPGEELAEPQAAGGNQKKGDKTPGGGGANLKGDRSRL). A propeptide spanning residues 24–73 (KPGTPPKVPRTPPGEELAEPQAAGGNQKKGDKTPGGGGANLKGDRSRLLR) is cleaved from the precursor. Over residues 26–35 (GTPPKVPRTP) the composition is skewed to pro residues. The cysteines at positions 110 and 126 are disulfide-linked.

The protein belongs to the natriuretic peptide family. In terms of processing, degraded by IDE (in vitro). As to expression, expressed exclusively in brain.

Its subcellular location is the secreted. Hormone which plays a role in endochondral ossification through regulation of cartilaginous growth plate chondrocytes proliferation and differentiation. May also be vasoactive and natriuretic. Acts by specifically binding and stimulating NPR2 to produce cGMP. Binds the clearance receptor NPR3. In Rattus norvegicus (Rat), this protein is C-type natriuretic peptide (Nppc).